The primary structure comprises 667 residues: Leucine zipper putative tumor suppressor 2 (667 aa).

Over residues 1 to 25 (MAIVQTLPVPLEPAPEAATAQQAPA) the composition is skewed to low complexity. Disordered regions lie at residues 1 to 132 (MAIV…PVSG), 150 to 325 (PVLP…DEAL), and 516 to 541 (QEAE…PPVP). The segment at 1-333 (MAIVQTLPVP…ALLHCVLEGK (333 aa)) is required for centrosomal localization. Residues 172-181 (PSGSQGSLTQ) show a composition bias toward polar residues. The span at 187-198 (ASSSSSSSSSAA) shows a compositional bias: low complexity. Residues 212–232 (PSGTLSDSGRNSLSSLPTYST) are compositionally biased toward polar residues. The segment covering 241 to 282 (SPGGHLPSHGPGRGALPGPARGAPTGPSHSDSGRSSSSKSTG) has biased composition (low complexity). Phosphoserine is present on Ser248. A compositionally biased stretch (gly residues) spans 283–294 (SLGGRLAGGLLG). At Ser295 the chain carries Phosphoserine. Residues 310-321 (SPPPPPPPPPPS) show a composition bias toward pro residues. Positions 329–647 (VLEGKLRDRE…LELEARELAD (319 aa)) form a coiled coil. Positions 445–667 (SGEISLLKQQ…CLEEITATEI (223 aa)) are sufficient for interaction with CTNNB1. Residues 448-667 (ISLLKQQLKE…CLEEITATEI (220 aa)) are sufficient for interaction with KATNB1 and for inhibition of katanin-mediated microtubule severing. Over residues 516–526 (QEAERLREKAG) the composition is skewed to basic and acidic residues. Ser568 carries the phosphoserine modification. Residues 629 to 638 (LEQELQQLSL) carry the Nuclear export signal motif.

This sequence belongs to the LZTS2 family. As to quaternary structure, interacts with KATNB1. Also interacts with CTNNB1, gamma-tubulin and KIF23.

The protein resides in the cytoplasm. The protein localises to the cytoskeleton. It localises to the microtubule organizing center. It is found in the centrosome. Negative regulator of katanin-mediated microtubule severing and release from the centrosome. Required for central spindle formation and the completion of cytokinesis. May negatively regulate axonal outgrowth by preventing the formation of microtubule bundles that are necessary for transport within the elongating axon. Negative regulator of the Wnt signaling pathway. Represses beta-catenin-mediated transcriptional activation by promoting the nuclear exclusion of beta-catenin. The sequence is that of Leucine zipper putative tumor suppressor 2 from Bos taurus (Bovine).